Here is a 521-residue protein sequence, read N- to C-terminus: Lipid-translocating exporter-like protein RTA1 (521 aa).

The next 7 helical transmembrane spans lie at 186–206 (GAPIFFTIAFAISTILHSWQC), 211–231 (AWKLIWLQPACAALFTLGYAL), 249–269 (LALFILSQICIYLGPPLLELA), 292–312 (VTAFFGGLMAIVEGLSGSGVS), 332–352 (LVALALQVCVIFIFVYLSVLF), 371–391 (TLMTLYLSMALIFIRCVFRLV), and 418–438 (EAYFYAFEASLMLINSFLWNV). Residues 493–521 (THSQPQELYENPNGNGHKKFRLGNGGRAT) are disordered.

It belongs to the lipid-translocating exporter (LTE) (TC 9.A.26.1) family.

It localises to the membrane. Lipid-translocating exporter-like protein; part of the gene cluster that mediates the biosynthesis of phomenoic acid, a long chain aliphatic carboxylic acid that does not appear to be essential for pathogenicity but may play a role in allowing to outcompete other fungi in the environmental niche via its antifungal properties. The polypeptide is Lipid-translocating exporter-like protein RTA1 (Leptosphaeria maculans (strain JN3 / isolate v23.1.3 / race Av1-4-5-6-7-8) (Blackleg fungus)).